Consider the following 54-residue polypeptide: MKKYVCVVCGYIYDPAEGDPDNGVNPGTSFEDIPDDWVCPLCGVGKDQFEPSEE.

The 54-residue stretch at 1–54 (MKKYVCVVCGYIYDPAEGDPDNGVNPGTSFEDIPDDWVCPLCGVGKDQFEPSEE) folds into the Rubredoxin-like domain. Fe cation-binding residues include Cys-6, Cys-9, Cys-39, and Cys-42.

This sequence belongs to the rubredoxin family. It depends on Fe(3+) as a cofactor.

Its function is as follows. Rubredoxin is a small nonheme, iron protein lacking acid-labile sulfide. Its single Fe, chelated to 4 Cys, functions as an electron acceptor and may also stabilize the conformation of the molecule. Functions as an intermediate component in the electron transfer chain: NADH-&gt;NROR-&gt;Rd-&gt;FprA1/2 in which Rd serves as the proximal electron donor to the FDPs that exhibit H(2)O-forming NADH oxidase activity. Also functions as the proximal electron donor to the Dfx and revRbr proteins that display superoxide reductase (SOR) and NADH peroxidase activity, respectively. Therefore, is a key electron carrier in an efficient multienzyme complex that can scavenge O(2) and reactive oxygen species (ROS), and thus plays an important role in the oxidative stress defense system in C.acetobutylicum, an obligate anaerobic bacterium. In Clostridium acetobutylicum (strain ATCC 824 / DSM 792 / JCM 1419 / IAM 19013 / LMG 5710 / NBRC 13948 / NRRL B-527 / VKM B-1787 / 2291 / W), this protein is Rubredoxin (rd).